Reading from the N-terminus, the 430-residue chain is Probable sulfoacetate transporter SauU (430 aa).

10 consecutive transmembrane segments (helical) span residues 47 to 67, 83 to 103, 142 to 162, 165 to 185, 228 to 248, 263 to 283, 301 to 321, 327 to 347, 362 to 382, and 390 to 410; these read LGLVFSAFAYPYAAMQILGGW, LIWGVATVLTGFAGSVLILVV, FARLGGAITPPVVLVIVAAAG, EAFIVLGAVSLGWTLLYAFFF, WLVTFVDFCYGWSLWVYLTWL, LALFTALPLMAGVVGDTLGGV, AVLFVGLAGSLMFIAPMTFTA, VILLSLSFFFLELTNAVLWSL, MMNTGFGVAGMVSPVVFGYLI, and LPFMISGALLGVGALASLFIN.

Belongs to the major facilitator superfamily.

It is found in the cell membrane. May transport sulfoacetate into the cell. This chain is Probable sulfoacetate transporter SauU (sauU), found in Cupriavidus necator (strain ATCC 17699 / DSM 428 / KCTC 22496 / NCIMB 10442 / H16 / Stanier 337) (Ralstonia eutropha).